We begin with the raw amino-acid sequence, 786 residues long: m7GpppN-mRNA hydrolase dcap-2 (786 aa).

The span at 25-61 shows a compositional bias: polar residues; the sequence is QKQNKSTEEPPSSVQKLLASLQQAQNKSDLSEQPSTS. The segment at 25-148 is disordered; the sequence is QKQNKSTEEP…QQQQQYKGPR (124 aa). Residues 62–72 show a composition bias toward basic residues; the sequence is KPKKNEKRKKA. Polar residues-rich tracts occupy residues 101–111 and 118–133; these read MQQQAENARIS and QVSTSKGSSRNTTAPE. The span at 134–144 shows a compositional bias: low complexity; it reads QQNYQQQQQQY. The region spanning 238–366 is the Nudix hydrolase domain; sequence STVPTYGAIL…LPAYLQGNKF (129 aa). Positions 273 to 294 match the Nudix box motif; the sequence is GKINQAEPPRDAAIRETFEETG. Residues Glu288 and Glu292 each contribute to the Mg(2+) site. Disordered stretches follow at residues 556-576 and 623-655; these read IMHSPNHPLPPTSNSPATPTA and ISSTQKQSIPKATAAPPSTEKTRSASLSGSSQV. Polar residues-rich tracts occupy residues 623–632 and 646–655; these read ISSTQKQSIP and SASLSGSSQV.

This sequence belongs to the Nudix hydrolase family. DCP2 subfamily. May be a component of the decapping complex composed of dcap-1 and dcap-2. It depends on Mg(2+) as a cofactor. The cofactor is Mn(2+). As to expression, expressed in sensory neurons.

The protein resides in the cytoplasmic granule. It is found in the cytoplasm. Its subcellular location is the perinuclear region. It catalyses the reaction a 5'-end (N(7)-methyl 5'-triphosphoguanosine)-ribonucleoside in mRNA + H2O = N(7)-methyl-GDP + a 5'-end phospho-ribonucleoside in mRNA + 2 H(+). The enzyme catalyses a 5'-end (N(2),N(2),N(7)-trimethyl 5'-triphosphoguanosine)-ribonucleoside in mRNA + H2O = N(2),N(2),N(7)-trimethyl-GDP + a 5'-end phospho-ribonucleoside in mRNA + 2 H(+). Inhibited by capped and uncapped RNA. Not inhibited by dinucleotide cap or methylated nucleotide analogs. Decapping metalloenzyme that catalyzes the cleavage of the cap structure on mRNAs. Removes the 7-methyl guanine cap structure from mRNA molecules, yielding a 5'-phosphorylated mRNA fragment and 7m-GDP. RNA-decapping enzyme although it does not bind the RNA cap. May contribute to gene regulation in multiple RNA pathways including monomethylguanosine- and trimethylguanosine-capped RNAs. In oocytes, may play a role in the response to stress induced by heat shock, osmotic stress and anoxia. Required for the developmental axon guidance and regrowth of PLM touch receptor neurons. Early in embryogenesis, plays a role in ciliary shape formation in sensory neurons. Promotes survival at high temperatures. This chain is m7GpppN-mRNA hydrolase dcap-2, found in Caenorhabditis elegans.